A 322-amino-acid chain; its full sequence is RNA-binding protein KhpB (322 aa).

The tract at residues 3-52 (VFEGNTVAAAIAAGLKQLHRTRDQVEVEVIAEAKKGFLGLGKHPAQVRLT) is jag_N domain. Positions 58-82 (AAPATTPTSATATAQQSVATESTTA) are enriched in low complexity. The segment at 58–162 (AAPATTPTSA…AADQSQTPRT (105 aa)) is disordered. The residue at position 89 (threonine 89) is a Phosphothreonine. The span at 89 to 99 (TVQTPKSTPTR) shows a compositional bias: polar residues. Residues 100–129 (QAKTSQATTSAAKPATSKAKAVAKPASMAV) are compositionally biased toward low complexity. The span at 141–161 (SKPATTSKTKSVAADQSQTPR) shows a compositional bias: polar residues. The region spanning 174 to 251 (ETAVRALCDY…ASHVNVVLDV (78 aa)) is the KH domain. An R3H domain is found at 256–322 (ERRAATLKRL…HRAVVVAIRK (67 aa)).

As to quaternary structure, forms a complex with KhpA.

The protein localises to the cytoplasm. A probable RNA chaperone. Forms a complex with KhpA which binds to cellular RNA and controls its expression. Plays a role in peptidoglycan (PG) homeostasis and cell length regulation. In terms of biological role, necessary for correct cell elongation. This chain is RNA-binding protein KhpB, found in Lactiplantibacillus plantarum (strain ATCC BAA-793 / NCIMB 8826 / WCFS1) (Lactobacillus plantarum).